We begin with the raw amino-acid sequence, 211 residues long: Histidine biosynthesis bifunctional protein HisIE (211 aa).

Positions 1–122 (MSFKAAEVSS…DAQEESQMVW (122 aa)) are phosphoribosyl-AMP cyclohydrolase. Residues 123 to 211 (LHQLEQLLAA…VVNKLKERHK (89 aa)) form a phosphoribosyl-ATP pyrophosphohydrolase region.

It in the N-terminal section; belongs to the PRA-CH family. In the C-terminal section; belongs to the PRA-PH family.

It localises to the cytoplasm. The enzyme catalyses 1-(5-phospho-beta-D-ribosyl)-ATP + H2O = 1-(5-phospho-beta-D-ribosyl)-5'-AMP + diphosphate + H(+). The catalysed reaction is 1-(5-phospho-beta-D-ribosyl)-5'-AMP + H2O = 1-(5-phospho-beta-D-ribosyl)-5-[(5-phospho-beta-D-ribosylamino)methylideneamino]imidazole-4-carboxamide. It functions in the pathway amino-acid biosynthesis; L-histidine biosynthesis; L-histidine from 5-phospho-alpha-D-ribose 1-diphosphate: step 2/9. Its pathway is amino-acid biosynthesis; L-histidine biosynthesis; L-histidine from 5-phospho-alpha-D-ribose 1-diphosphate: step 3/9. In Vibrio parahaemolyticus serotype O3:K6 (strain RIMD 2210633), this protein is Histidine biosynthesis bifunctional protein HisIE.